The primary structure comprises 509 residues: tRNA-2-methylthio-N(6)-dimethylallyladenosine synthase (509 aa).

Positions 1–20 (MNEKQKQESGQVNPADKTSE) are disordered. One can recognise an MTTase N-terminal domain in the interval 66–184 (RKFYIRTYGC…LPELLSEAYL (119 aa)). Residues Cys75, Cys111, Cys145, Cys221, Cys225, and Cys228 each contribute to the [4Fe-4S] cluster site. One can recognise a Radical SAM core domain in the interval 207–437 (RNGKIKGWVN…NDLVKEISAK (231 aa)). One can recognise a TRAM domain in the interval 440-503 (KEYEGRTVEV…TWSLDGVMAG (64 aa)).

The protein belongs to the methylthiotransferase family. MiaB subfamily. Monomer. [4Fe-4S] cluster serves as cofactor.

It localises to the cytoplasm. The enzyme catalyses N(6)-dimethylallyladenosine(37) in tRNA + (sulfur carrier)-SH + AH2 + 2 S-adenosyl-L-methionine = 2-methylsulfanyl-N(6)-dimethylallyladenosine(37) in tRNA + (sulfur carrier)-H + 5'-deoxyadenosine + L-methionine + A + S-adenosyl-L-homocysteine + 2 H(+). Its function is as follows. Catalyzes the methylthiolation of N6-(dimethylallyl)adenosine (i(6)A), leading to the formation of 2-methylthio-N6-(dimethylallyl)adenosine (ms(2)i(6)A) at position 37 in tRNAs that read codons beginning with uridine. This is tRNA-2-methylthio-N(6)-dimethylallyladenosine synthase from Bacillus velezensis (strain DSM 23117 / BGSC 10A6 / LMG 26770 / FZB42) (Bacillus amyloliquefaciens subsp. plantarum).